The following is a 190-amino-acid chain: Adenylate kinase (190 aa).

Position 11 to 16 (11 to 16) interacts with ATP; that stretch reads GSGKGT. The NMP stretch occupies residues 31 to 60; that stretch reads STGDVLRGEMKAETELGKIAKDYIEKGQLV. Residues Thr-32, Arg-37, 58–60, 86–89, and Gln-93 each bind AMP; these read QLV and GFPR. Residues 127–137 are LID; the sequence is ERGKVSGRSDD. Arg-128 lines the ATP pocket. Residues Arg-134 and Arg-145 each coordinate AMP. Residue Gly-173 participates in ATP binding.

The protein belongs to the adenylate kinase family. Monomer.

The protein resides in the cytoplasm. The enzyme catalyses AMP + ATP = 2 ADP. It participates in purine metabolism; AMP biosynthesis via salvage pathway; AMP from ADP: step 1/1. Its function is as follows. Catalyzes the reversible transfer of the terminal phosphate group between ATP and AMP. Plays an important role in cellular energy homeostasis and in adenine nucleotide metabolism. The polypeptide is Adenylate kinase (Parabacteroides distasonis (strain ATCC 8503 / DSM 20701 / CIP 104284 / JCM 5825 / NCTC 11152)).